The sequence spans 565 residues: 4-coumarate--CoA ligase-like 2 (565 aa).

ATP contacts are provided by Ser-221, Ser-222, Gly-223, Thr-224, Thr-225, and Lys-229. Phe-265 is a binding site for (E)-4-coumaroyl-AMP. Lys-286 is a CoA binding site. Positions 288–359 (DMAKLLSAVE…ENYPKVKILQ (72 aa)) are SBD1. Gly-337, Gln-359, Gly-360, and Thr-364 together coordinate (E)-4-coumaroyl-AMP. ATP contacts are provided by Gln-359, Gly-360, Thr-364, Asp-445, and Arg-460. An SBD2 region spans residues 360–424 (GYGLTESTAI…IRSPTVMKGY (65 aa)). (E)-4-coumaroyl-AMP-binding residues include Lys-462 and Lys-466. A CoA-binding site is contributed by Gly-469. Lys-551 is an ATP binding site. The Microbody targeting signal motif lies at 563 to 565 (SKL).

Belongs to the ATP-dependent AMP-binding enzyme family. Requires Mg(2+) as cofactor.

It localises to the peroxisome. It catalyses the reaction (E)-4-coumarate + ATP + CoA = (E)-4-coumaroyl-CoA + AMP + diphosphate. The catalysed reaction is (E)-4-coumarate + ATP + H(+) = (E)-4-coumaroyl-AMP + diphosphate. The enzyme catalyses (E)-4-coumaroyl-AMP + CoA = (E)-4-coumaroyl-CoA + AMP + H(+). In terms of biological role, carboxylate--CoA ligase that may use 4-coumarate as substrate. Follows a two-step reaction mechanism, wherein the carboxylate substrate first undergoes adenylation by ATP, followed by a thioesterification in the presence of CoA to yield the final CoA thioester. The protein is 4-coumarate--CoA ligase-like 2 of Arabidopsis thaliana (Mouse-ear cress).